A 238-amino-acid chain; its full sequence is Uridylate kinase (238 aa).

Residue 12–15 (KLSG) coordinates ATP. G54 is a binding site for UMP. 2 residues coordinate ATP: G55 and R59. UMP is bound by residues D74 and 135 to 142 (TGNPYFTT). Residues T162, Y168, and D171 each contribute to the ATP site.

This sequence belongs to the UMP kinase family. In terms of assembly, homohexamer.

The protein resides in the cytoplasm. It catalyses the reaction UMP + ATP = UDP + ADP. It functions in the pathway pyrimidine metabolism; CTP biosynthesis via de novo pathway; UDP from UMP (UMPK route): step 1/1. Its activity is regulated as follows. Inhibited by UTP. In terms of biological role, catalyzes the reversible phosphorylation of UMP to UDP. This chain is Uridylate kinase, found in Lawsonia intracellularis (strain PHE/MN1-00).